An 87-amino-acid polypeptide reads, in one-letter code: Phosphoribosyl-ATP pyrophosphatase (87 aa).

This sequence belongs to the PRA-PH family.

The protein resides in the cytoplasm. It catalyses the reaction 1-(5-phospho-beta-D-ribosyl)-ATP + H2O = 1-(5-phospho-beta-D-ribosyl)-5'-AMP + diphosphate + H(+). It functions in the pathway amino-acid biosynthesis; L-histidine biosynthesis; L-histidine from 5-phospho-alpha-D-ribose 1-diphosphate: step 2/9. The protein is Phosphoribosyl-ATP pyrophosphatase of Clavibacter sepedonicus (Clavibacter michiganensis subsp. sepedonicus).